A 240-amino-acid polypeptide reads, in one-letter code: Ribonuclease PH (240 aa).

Residues Arg-87 and 125 to 127 (GTR) each bind phosphate.

It belongs to the RNase PH family. As to quaternary structure, homohexameric ring arranged as a trimer of dimers.

It catalyses the reaction tRNA(n+1) + phosphate = tRNA(n) + a ribonucleoside 5'-diphosphate. Functionally, phosphorolytic 3'-5' exoribonuclease that plays an important role in tRNA 3'-end maturation. Removes nucleotide residues following the 3'-CCA terminus of tRNAs; can also add nucleotides to the ends of RNA molecules by using nucleoside diphosphates as substrates, but this may not be physiologically important. Probably plays a role in initiation of 16S rRNA degradation (leading to ribosome degradation) during starvation. This chain is Ribonuclease PH, found in Pseudomonas fluorescens (strain SBW25).